A 167-amino-acid chain; its full sequence is Peptide deformylase (167 aa).

The Fe cation site is built by Cys91 and His133. Residue Glu134 is part of the active site. Residue His137 participates in Fe cation binding.

This sequence belongs to the polypeptide deformylase family. The cofactor is Fe(2+).

The catalysed reaction is N-terminal N-formyl-L-methionyl-[peptide] + H2O = N-terminal L-methionyl-[peptide] + formate. Functionally, removes the formyl group from the N-terminal Met of newly synthesized proteins. Requires at least a dipeptide for an efficient rate of reaction. N-terminal L-methionine is a prerequisite for activity but the enzyme has broad specificity at other positions. This Baumannia cicadellinicola subsp. Homalodisca coagulata protein is Peptide deformylase.